The following is a 237-amino-acid chain: Probable transcriptional regulatory protein Mfl546 (237 aa).

Residues 1–20 (MGRAHEVRAASMAKTAAKKS) form a disordered region. Residues 9 to 20 (AASMAKTAAKKS) are compositionally biased toward low complexity.

The protein belongs to the TACO1 family.

The protein resides in the cytoplasm. The chain is Probable transcriptional regulatory protein Mfl546 from Mesoplasma florum (strain ATCC 33453 / NBRC 100688 / NCTC 11704 / L1) (Acholeplasma florum).